Consider the following 541-residue polypeptide: Tyrosine-protein kinase Yes (541 aa).

The N-myristoyl glycine moiety is linked to residue Gly2. Cys3 is lipidated: S-palmitoyl cysteine; in membrane form. Phosphotyrosine is present on Tyr32. Positions 89–150 constitute an SH3 domain; it reads GGVTIFVALY…PSNYVVPADS (62 aa). Residues 156–253 enclose the SH2 domain; sequence WYFGKMGRKD…GLCHKLTTVC (98 aa). A Protein kinase domain is found at 275 to 528; sequence LRLEVKLGQG…YIQSFLEDYF (254 aa). Residues 281–289 and Lys303 contribute to the ATP site; that span reads LGQGCFGEV. Tyr334 and Tyr343 each carry phosphotyrosine. The active-site Proton acceptor is Asp394. At Tyr424 the chain carries Phosphotyrosine; by autocatalysis. A Phosphotyrosine modification is found at Tyr535.

Belongs to the protein kinase superfamily. Tyr protein kinase family. SRC subfamily. Interacts with YAP1. Interacts with FASLG. Interacts with CTNND1; this interaction allows YES1-mediated activation of FYN and FER and subsequent phosphorylation of CTNND1. Interacts with CSF1R. Interacts with IL6ST/gp130. Interacts with SCRIB, when YES1 is in a closed conformation; the interaction facilitates YES1 autophosphorylation. In terms of processing, phosphorylated. Phosphorylation by CSK on the C-terminal tail maintains the enzyme in an inactive state. Autophosphorylation at Tyr-424 maintains enzyme activity by blocking CSK-mediated inhibition. Palmitoylation at Cys-3 promotes membrane localization.

The protein localises to the cell membrane. It localises to the cytoplasm. The protein resides in the cytoskeleton. Its subcellular location is the microtubule organizing center. It is found in the centrosome. The protein localises to the cytosol. It localises to the cell junction. The enzyme catalyses L-tyrosyl-[protein] + ATP = O-phospho-L-tyrosyl-[protein] + ADP + H(+). Functionally, non-receptor protein tyrosine kinase that is involved in the regulation of cell growth and survival, apoptosis, cell-cell adhesion, cytoskeleton remodeling, and differentiation. Stimulation by receptor tyrosine kinases (RTKs) including EGFR, PDGFR, CSF1R and FGFR leads to recruitment of YES1 to the phosphorylated receptor, and activation and phosphorylation of downstream substrates. Upon EGFR activation, promotes the phosphorylation of PARD3 to favor epithelial tight junction assembly. Participates in the phosphorylation of specific junctional components such as CTNND1 by stimulating the FYN and FER tyrosine kinases at cell-cell contacts. Upon T-cell stimulation by CXCL12, phosphorylates collapsin response mediator protein 2/DPYSL2 and induces T-cell migration. Participates in CD95L/FASLG signaling pathway and mediates AKT-mediated cell migration. Plays a role in cell cycle progression by phosphorylating the cyclin dependent kinase 4/CDK4 thus regulating the G1 phase. Also involved in G2/M progression and cytokinesis. Catalyzes phosphorylation of organic cation transporter OCT2 which induces its transport activity. This chain is Tyrosine-protein kinase Yes (Yes1), found in Mus musculus (Mouse).